A 539-amino-acid chain; its full sequence is Glycerophosphoinositol inositolphosphodiesterase GDPD2 (539 aa).

Residues 1 to 38 (MAESPGCCSVWARCLHCLYSCHWRKCPRERMQTSKCDC) are Cytoplasmic-facing. Residues 39–59 (IWFGLLFLTFLLSLSWLYIGL) traverse the membrane as a helical segment. At 60-85 (VLLNDLHNFNEFLFRRWGHWMDWSLA) the chain is on the extracellular side. The chain crosses the membrane as a helical span at residues 86–106 (FLLVISLLVTYASLLLVLALL). Topologically, residues 107 to 121 (LRLCRQPLHLHSLHK) are cytoplasmic. The chain crosses the membrane as a helical span at residues 122–142 (VLLLLIMLLVAAGLVGLDIQW). The Extracellular portion of the chain corresponds to 143–154 (QQEWHSLRVSLQ). Residues 155-175 (ATAPFLHIGAAAGIALLAWPV) traverse the membrane as a helical segment. The Cytoplasmic portion of the chain corresponds to 176–188 (ADTFYRIHRRGPK). A helical transmembrane segment spans residues 189–209 (ILLLLLFFGVVLVIYLAPLCI). Topologically, residues 210-490 (SSPCIMEPRD…PIWLITPQTY (281 aa)) are extracellular. A GP-PDE domain is found at 224–479 (PGLVGHRGAP…NDCQLLQQMR (256 aa)). Glu-256, Asp-258, and His-271 together coordinate a divalent metal cation. N-linked (GlcNAc...) asparagine glycosylation occurs at Asn-442. The helical transmembrane segment at 491–511 (LIIWVITNCVSTMLLLWTFLL) threads the bilayer. At 512–539 (QRRFVKKRGKTGLETAVLLTRINNFMME) the chain is on the cytoplasmic side.

The protein belongs to the glycerophosphoryl diester phosphodiesterase family. Requires Ca(2+) as cofactor.

It is found in the cell membrane. Its subcellular location is the cytoplasm. The protein resides in the cytoskeleton. The enzyme catalyses sn-glycero-3-phospho-1D-myo-inositol + H2O = 1D-myo-inositol 1-phosphate + glycerol + H(+). Has glycerophosphoinositol inositolphosphodiesterase activity and specifically hydrolyzes glycerophosphoinositol, with no activity for other substrates such as glycerophosphoinositol 4-phosphate, glycerophosphocholine, glycerophosphoethanolamine, and glycerophosphoserine. Accelerates the program of osteoblast differentiation and growth. May play a role in remodeling of the actin cytoskeleton. This Homo sapiens (Human) protein is Glycerophosphoinositol inositolphosphodiesterase GDPD2 (GDPD2).